A 755-amino-acid polypeptide reads, in one-letter code: Probable ubiquitin carboxyl-terminal hydrolase creB (755 aa).

Residues 1-32 (MGSFLRSLRRDVGPPTPSVGATPAKKEPPVPP) are disordered. The 414-residue stretch at 55 to 468 (FGMENYGNTC…CAYVLFYQET (414 aa)) folds into the USP domain. C64 acts as the Nucleophile in catalysis. Disordered stretches follow at residues 119–146 (EKQKAANAQRPGAPPNQPQKPEDKDSPE) and 237–270 (EASKQPEPERSLPPAESADSTELSGSSGSKTPNT). The span at 237-246 (EASKQPEPER) shows a compositional bias: basic and acidic residues. Residues 254-270 (ADSTELSGSSGSKTPNT) show a composition bias toward polar residues. H419 (proton acceptor) is an active-site residue. The tract at residues 495-755 (TLKQNGYPLS…LKKKSFSILS (261 aa)) is disordered. Residues 547 to 560 (ESSPADPSTTASAT) are compositionally biased toward low complexity. Residues 577–648 (KKSDSHFKKE…RRHSPDDTKK (72 aa)) show a composition bias toward basic and acidic residues. A coiled-coil region spans residues 581–630 (SHFKKERAKEEKERKANEKEKEKQRRRDQEARIREQRREDAEIRAALEAS). Residues 654–666 (SRLKRGSKSFSHR) are compositionally biased toward basic residues. Polar residues predominate over residues 693-709 (NGASESQQQLPNGQSPG). Basic and acidic residues predominate over residues 718–733 (TGLDEERDTLKDPKHD). Positions 734–755 (RSGHHGKWRSFSLKKKSFSILS) are enriched in basic residues.

It belongs to the peptidase C19 family. In terms of assembly, interacts with creA, creC and qutD.

The enzyme catalyses Thiol-dependent hydrolysis of ester, thioester, amide, peptide and isopeptide bonds formed by the C-terminal Gly of ubiquitin (a 76-residue protein attached to proteins as an intracellular targeting signal).. Functionally, ubiquitin thioesterase component of the regulatory network controlling carbon source utilization through ubiquitination and deubiquitination involving creA, creB, creC, creD and acrB. Deubiquitinates the creA catabolic repressor and the quinate permease qutD. Also plays a role in response to carbon starvation and the control of extracellular proteases activity. In Aspergillus flavus (strain ATCC 200026 / FGSC A1120 / IAM 13836 / NRRL 3357 / JCM 12722 / SRRC 167), this protein is Probable ubiquitin carboxyl-terminal hydrolase creB (creB).